A 580-amino-acid chain; its full sequence is Rho guanine nucleotide exchange factor 25 (580 aa).

Residues 48–67 (AASGLAAPSGPSSGLSSGPC) are compositionally biased toward low complexity. Disordered stretches follow at residues 48–76 (AASG…GPVS) and 128–157 (LEGP…KKKA). In terms of domain architecture, DH spans 160–336 (RSMYVLSELV…CFVPKRCNDM (177 aa)). Positions 278–299 (LGHRLQLNDLLIKPVQRIMKYQ) are important for binding to Rho GTPases. The PH domain occupies 348–466 (KLTAQGKLLG…WIKHVAQILE (119 aa)). The interval 467-493 (SQRDFLNALQSPIEYQRRESQTNSLGR) is sufficient to bind activated GNAQ. 2 disordered regions span residues 482-524 (QRRE…GSLP) and 545-580 (ALGD…EDEL). Polar residues predominate over residues 509 to 520 (DQAQGSTHTPIN). Residues 555–566 (DSPPVSPTPKTP) are compositionally biased toward pro residues.

In terms of assembly, interacts (via the DH domain) with POPDC1 (via the C-terminus cytoplasmic tail). Interacts with activated GNAQ and GNA11. Interacts with RHOA, CDC42 and RAC1. Isoform 1 and isoform 2 are highly expressed in excitable tissues, such as brain, heart and muscle. Also detected in kidney and liver.

The protein localises to the cell membrane. It localises to the cytoplasm. It is found in the myofibril. The protein resides in the sarcomere. In terms of biological role, may play a role in actin cytoskeleton reorganization in different tissues since its activation induces formation of actin stress fibers. It works as a guanine nucleotide exchange factor for Rho family of small GTPases. Links specifically G alpha q/11-coupled receptors to RHOA activation. May be an important regulator of processes involved in axon and dendrite formation. In neurons seems to be an exchange factor primarily for RAC1. Involved in skeletal myogenesis. This is Rho guanine nucleotide exchange factor 25 (ARHGEF25) from Homo sapiens (Human).